We begin with the raw amino-acid sequence, 99 residues long: MALTKAEMAERLFDEVGLNKREAKEFVDAFFDVLRDALEQGRQVKLSGFGNFDLRRKNQRPGRNPKTGEEIPISARTVVTFRPGQKLKERVEAYAGSGQ.

This sequence belongs to the bacterial histone-like protein family. As to quaternary structure, heterodimer of an alpha and a beta chain.

Functionally, this protein is one of the two subunits of integration host factor, a specific DNA-binding protein that functions in genetic recombination as well as in transcriptional and translational control. This chain is Integration host factor subunit alpha (ihfA), found in Xanthomonas axonopodis pv. citri (strain 306).